Consider the following 248-residue polypeptide: ATP synthase subunit a, chloroplastic (248 aa).

5 helical membrane passes run 38-58 (QVLITSWIVIAVLLGSATIAV), 96-116 (VPFIGTMFLFIFVSNWSGALL), 135-155 (INTTVALALLTSVAYFYAGLA), 200-220 (LVVAVLVSPVPLVVPIPVMFL), and 221-241 (GLFTSGIQALIFATLAAAYIG).

The protein belongs to the ATPase A chain family. In terms of assembly, F-type ATPases have 2 components, CF(1) - the catalytic core - and CF(0) - the membrane proton channel. CF(1) has five subunits: alpha(3), beta(3), gamma(1), delta(1), epsilon(1). CF(0) has four main subunits: a, b, b' and c.

It localises to the plastid. Its subcellular location is the chloroplast thylakoid membrane. In terms of biological role, key component of the proton channel; it plays a direct role in the translocation of protons across the membrane. The chain is ATP synthase subunit a, chloroplastic from Pinus koraiensis (Korean pine).